The sequence spans 507 residues: Maturase K (507 aa).

The protein belongs to the intron maturase 2 family. MatK subfamily.

It localises to the plastid. The protein resides in the chloroplast. In terms of biological role, usually encoded in the trnK tRNA gene intron. Probably assists in splicing its own and other chloroplast group II introns. This Liriodendron tulipifera (Tuliptree) protein is Maturase K.